Here is a 51-residue protein sequence, read N- to C-terminus: Large ribosomal subunit protein bL33 (51 aa).

The interval 1–23 is disordered; the sequence is MREKIKLESSAGTGHFYTTTKNK. Positions 10-20 are enriched in polar residues; it reads SAGTGHFYTTT.

Belongs to the bacterial ribosomal protein bL33 family.

This chain is Large ribosomal subunit protein bL33, found in Nitrosomonas eutropha (strain DSM 101675 / C91 / Nm57).